Reading from the N-terminus, the 238-residue chain is 6-phosphogluconolactonase (238 aa).

Belongs to the glucosamine/galactosamine-6-phosphate isomerase family. 6-phosphogluconolactonase subfamily.

It carries out the reaction 6-phospho-D-glucono-1,5-lactone + H2O = 6-phospho-D-gluconate + H(+). It functions in the pathway carbohydrate degradation; pentose phosphate pathway; D-ribulose 5-phosphate from D-glucose 6-phosphate (oxidative stage): step 2/3. Hydrolysis of 6-phosphogluconolactone to 6-phosphogluconate. This is 6-phosphogluconolactonase (pgl) from Pseudomonas aeruginosa (strain ATCC 15692 / DSM 22644 / CIP 104116 / JCM 14847 / LMG 12228 / 1C / PRS 101 / PAO1).